Consider the following 373-residue polypeptide: MNSLQVLTKKVLIENKAFSNYHEDDSFILQQLGLWWENGPIGFCKQCKMVTGGSMSCSDVDSYELDRALVKAVKENQTDLIKLFVLWGAEINFGIVCAKTERTKVLCIQLGADPKFLDVGLYNMFVDLIKQQKVLLAIDIYYDNISILDSFDSHDFYVLIDFIYNGFILNLDEKEKITKNTLVLKFWYKFAIEFNLVKPIRFLGKKFPHLDDWRLKTAVYLGNVDEIHHAYFQENIRLDPNHMMSLACMYPQNKLGIYYCFALGANINTALEALIRFINHELNRPFFSNYGIWSNVHFCISLGANPYTKKIQEILLREEKYDIMKLLFKKGLLSPHSILHKKILEPSEVRKIISTYQYTETFHSFSSLRDNVR.

The protein belongs to the asfivirus MGF 360 family.

In terms of biological role, plays a role in virus cell tropism, and may be required for efficient virus replication in macrophages. In Ornithodoros (relapsing fever ticks), this protein is Protein MGF 360-6L.